Reading from the N-terminus, the 257-residue chain is Hydroxyacylglutathione hydrolase (257 aa).

7 residues coordinate Zn(2+): His54, His56, Asp58, His59, His113, Asp137, and His175.

It belongs to the metallo-beta-lactamase superfamily. Glyoxalase II family. In terms of assembly, monomer. Zn(2+) is required as a cofactor.

It carries out the reaction an S-(2-hydroxyacyl)glutathione + H2O = a 2-hydroxy carboxylate + glutathione + H(+). Its pathway is secondary metabolite metabolism; methylglyoxal degradation; (R)-lactate from methylglyoxal: step 2/2. Its function is as follows. Thiolesterase that catalyzes the hydrolysis of S-D-lactoyl-glutathione to form glutathione and D-lactic acid. The chain is Hydroxyacylglutathione hydrolase from Trichormus variabilis (strain ATCC 29413 / PCC 7937) (Anabaena variabilis).